The sequence spans 515 residues: 1-pyrroline-5-carboxylate dehydrogenase (515 aa).

Active-site residues include Glu-286 and Cys-320.

The protein belongs to the aldehyde dehydrogenase family. RocA subfamily.

The enzyme catalyses L-glutamate 5-semialdehyde + NAD(+) + H2O = L-glutamate + NADH + 2 H(+). It functions in the pathway amino-acid degradation; L-proline degradation into L-glutamate; L-glutamate from L-proline: step 2/2. This chain is 1-pyrroline-5-carboxylate dehydrogenase, found in Oceanobacillus iheyensis (strain DSM 14371 / CIP 107618 / JCM 11309 / KCTC 3954 / HTE831).